A 529-amino-acid polypeptide reads, in one-letter code: Inosine-5'-monophosphate dehydrogenase (529 aa).

CBS domains lie at 129-185 and 189-246; these read MVTD…SKQV and MTKT…PLAT. NAD(+) contacts are provided by residues Asp-283 and 334–336; that span reads GVG. K(+)-binding residues include Gly-336 and Gly-338. Ser-339 contributes to the IMP binding site. A K(+)-binding site is contributed by Cys-341. The Thioimidate intermediate role is filled by Cys-341. IMP is bound by residues 374–376, 397–398, and 421–425; these read DGG, GS, and YRGMG. Arg-443 (proton acceptor) is an active-site residue. Glu-458 serves as a coordination point for IMP. Positions 511, 512, and 513 each coordinate K(+).

It belongs to the IMPDH/GMPR family. Homotetramer. Requires K(+) as cofactor.

The catalysed reaction is IMP + NAD(+) + H2O = XMP + NADH + H(+). It participates in purine metabolism; XMP biosynthesis via de novo pathway; XMP from IMP: step 1/1. With respect to regulation, mycophenolic acid (MPA) is a non-competitive inhibitor that prevents formation of the closed enzyme conformation by binding to the same site as the amobile flap. In contrast, mizoribine monophosphate (MZP) is a competitive inhibitor that induces the closed conformation. MPA is a potent inhibitor of mammalian IMPDHs but a poor inhibitor of the bacterial enzymes. MZP is a more potent inhibitor of bacterial IMPDH. In terms of biological role, catalyzes the conversion of inosine 5'-phosphate (IMP) to xanthosine 5'-phosphate (XMP), the first committed and rate-limiting step in the de novo synthesis of guanine nucleotides, and therefore plays an important role in the regulation of cell growth. The protein is Inosine-5'-monophosphate dehydrogenase of Mycobacterium leprae (strain TN).